A 401-amino-acid polypeptide reads, in one-letter code: Argininosuccinate synthase (401 aa).

Residue 8 to 16 participates in ATP binding; sequence AYSGGLDTS. Position 85 (Y85) interacts with L-citrulline. G115 contacts ATP. 3 residues coordinate L-aspartate: T117, N121, and D122. N121 is an L-citrulline binding site. 4 residues coordinate L-citrulline: R125, S173, E258, and Y270.

The protein belongs to the argininosuccinate synthase family. Type 1 subfamily. As to quaternary structure, homotetramer.

It is found in the cytoplasm. The catalysed reaction is L-citrulline + L-aspartate + ATP = 2-(N(omega)-L-arginino)succinate + AMP + diphosphate + H(+). It participates in amino-acid biosynthesis; L-arginine biosynthesis; L-arginine from L-ornithine and carbamoyl phosphate: step 2/3. In Staphylococcus carnosus (strain TM300), this protein is Argininosuccinate synthase.